The primary structure comprises 510 residues: Adenosine deaminase 2 (510 aa).

The signal sequence occupies residues 1–24 (MSGWPVLPALLLAVAMSSFHSATS). Residues 25 to 95 (RDEERNRLLM…GLMEKSAVFN (71 aa)) are dimerization. Residues His107 and His109 each contribute to the Zn(2+) site. Asp110 serves as a coordination point for substrate. A glycan (N-linked (GlcNAc...) asparagine) is linked at Asn122. Positions 122–182 (NATYRPYCYF…TEFDNSLLRT (61 aa)) are PRB domain. An intrachain disulfide couples Cys132 to Cys156. Residue Asn171 is glycosylated (N-linked (GlcNAc...) asparagine). Substrate-binding positions include 201-208 (WKKFKTIF), His290, and Gly323. A Zn(2+)-binding site is contributed by His353. Glu356 functions as the Proton donor in the catalytic mechanism. An N-linked (GlcNAc...) asparagine glycan is attached at Asn375. His381 serves as the catalytic Proton acceptor. Asp438 lines the Zn(2+) pocket. Asp439 serves as a coordination point for substrate.

Belongs to the metallo-dependent hydrolases superfamily. Adenosine and AMP deaminases family. ADGF subfamily. In terms of assembly, homodimer. Interacts with adenosine receptors. Binds heparin. Zn(2+) serves as cofactor.

Its subcellular location is the secreted. The enzyme catalyses adenosine + H2O + H(+) = inosine + NH4(+). Adenosine deaminase that may contribute to the degradation of extracellular adenosine, a signaling molecule that controls a variety of cellular responses. Requires elevated adenosine levels for optimal enzyme activity. Binds to cell surfaces via proteoglycans and may play a role in the regulation of cell proliferation and differentiation, independently of its enzyme activity. In Sus scrofa (Pig), this protein is Adenosine deaminase 2.